Reading from the N-terminus, the 126-residue chain is Holo-[acyl-carrier-protein] synthase (126 aa).

D9 and E58 together coordinate Mg(2+).

This sequence belongs to the P-Pant transferase superfamily. AcpS family. Mg(2+) is required as a cofactor.

The protein localises to the cytoplasm. It carries out the reaction apo-[ACP] + CoA = holo-[ACP] + adenosine 3',5'-bisphosphate + H(+). Its function is as follows. Transfers the 4'-phosphopantetheine moiety from coenzyme A to a Ser of acyl-carrier-protein. The chain is Holo-[acyl-carrier-protein] synthase from Photobacterium profundum (strain SS9).